A 479-amino-acid polypeptide reads, in one-letter code: Rifampicin monooxygenase (479 aa).

Thr-12, Asp-31, Lys-32, Arg-41, Gln-98, Val-122, Thr-156, Asp-278, Leu-291, and Asn-292 together coordinate FAD.

The protein belongs to the rifampicin monooxygenase family. The cofactor is FAD.

It catalyses the reaction rifampicin + NADPH + O2 = rifampicin para-naphthoquinone carboxamide + NADP(+) + H2O + H(+). The catalysed reaction is rifampicin + NADH + O2 = rifampicin para-naphthoquinone carboxamide + NAD(+) + H2O + H(+). Its function is as follows. Monooxygenase that can modify rifampicin, thereby inactivating its antibiotic activity. This is Rifampicin monooxygenase from Rhodococcus hoagii (Corynebacterium equii).